A 337-amino-acid polypeptide reads, in one-letter code: RNA 3'-terminal phosphate cyclase (337 aa).

ATP is bound by residues Gln101 and His282–Asp285. The Tele-AMP-histidine intermediate role is filled by His306.

Belongs to the RNA 3'-terminal cyclase family. Type 1 subfamily.

The protein localises to the cytoplasm. It carries out the reaction a 3'-end 3'-phospho-ribonucleotide-RNA + ATP = a 3'-end 2',3'-cyclophospho-ribonucleotide-RNA + AMP + diphosphate. Its function is as follows. Catalyzes the conversion of 3'-phosphate to a 2',3'-cyclic phosphodiester at the end of RNA. The mechanism of action of the enzyme occurs in 3 steps: (A) adenylation of the enzyme by ATP; (B) transfer of adenylate to an RNA-N3'P to produce RNA-N3'PP5'A; (C) and attack of the adjacent 2'-hydroxyl on the 3'-phosphorus in the diester linkage to produce the cyclic end product. The biological role of this enzyme is unknown but it is likely to function in some aspects of cellular RNA processing. The chain is RNA 3'-terminal phosphate cyclase (rtcA) from Saccharolobus solfataricus (strain ATCC 35092 / DSM 1617 / JCM 11322 / P2) (Sulfolobus solfataricus).